A 565-amino-acid chain; its full sequence is Periplasmic trehalase (565 aa).

Positions 1–30 (MKSPAPSRPQKMALIPACIFLCFAALSVQA) are cleaved as a signal peptide. Substrate is bound by residues Arg152, 159 to 160 (WD), Asn196, 205 to 207 (RSQ), 277 to 279 (RPE), and Gly310. Residues Asp312 and Glu496 each act as proton donor/acceptor in the active site. Glu511 contacts substrate. Positions 539–565 (CDNVPATRPLSESTTQPVKQKEAEPTP) are disordered.

Belongs to the glycosyl hydrolase 37 family. Monomer.

The protein localises to the periplasm. It carries out the reaction alpha,alpha-trehalose + H2O = alpha-D-glucose + beta-D-glucose. Functionally, provides the cells with the ability to utilize trehalose at high osmolarity by splitting it into glucose molecules that can subsequently be taken up by the phosphotransferase-mediated uptake system. The chain is Periplasmic trehalase from Escherichia coli O6:H1 (strain CFT073 / ATCC 700928 / UPEC).